The chain runs to 306 residues: Enoyl-CoA isomerase/hydratase MYCGRDRAFT_76805 (306 aa).

Substrate-binding positions include 103 to 107 (AGADL) and Gly-150.

Belongs to the enoyl-CoA hydratase/isomerase family.

It carries out the reaction a (3S)-3-hydroxyacyl-CoA = a (2E)-enoyl-CoA + H2O. The enzyme catalyses a 4-saturated-(3S)-3-hydroxyacyl-CoA = a (3E)-enoyl-CoA + H2O. Its pathway is siderophore biosynthesis. Functionally, enoyl-CoA isomerase/hydratase involved in the biosynthesis of a ferrichrome A-like siderophore which may contribute to organismal virulence. The first step of siderophore biosynthesis is performed by the HMG-CoA synthase (HMGS) MYCGRDRAFT_54740 which catalyzes the generation of HMG-CoA and CoA using acetoacetyl-CoA and acetyl-CoA as substrates. The enoyl-CoA isomerase/hydratase MYCGRDRAFT_76805 then catalyzes the conversion of HMG-CoA to methylglutaconyl-CoA. The acyltransferase MYCGRDRAFT_85486 then fuses methylglutaconyl-CoA with hydroxyornithine to yield methylglutaconyl hydroxyornithine. Methylglutaconyl hydroxyornithine is then available for use by the nonribosomal peptide synthetase NRPS2 to generate the ferrichrome A-like siderophore. The chain is Enoyl-CoA isomerase/hydratase MYCGRDRAFT_76805 from Zymoseptoria tritici (strain CBS 115943 / IPO323) (Speckled leaf blotch fungus).